The primary structure comprises 158 residues: Siroheme decarboxylase beta subunit (158 aa).

It belongs to the Ahb/Nir family. As to quaternary structure, forms a heterodimer composed of AhbA and AhbB.

It carries out the reaction siroheme + 2 H(+) = 12,18-didecarboxysiroheme + 2 CO2. Its pathway is porphyrin-containing compound metabolism; protoheme biosynthesis. In terms of biological role, involved in siroheme-dependent heme b biosynthesis. Catalyzes the decarboxylation of siroheme into didecarboxysiroheme. In Oleidesulfovibrio alaskensis (strain ATCC BAA-1058 / DSM 17464 / G20) (Desulfovibrio alaskensis), this protein is Siroheme decarboxylase beta subunit.